The chain runs to 3848 residues: Intermembrane lipid transfer protein tipC (3848 aa).

The Chorein N-terminal domain maps to 4–112 (HIAASVLTKY…KFQDEKQAKL (109 aa)). 12 disordered regions span residues 243 to 268 (IKKEDSGKQQQQQQQQQGEEQDDEIE), 450 to 481 (LKLQQQQQQQQQNLNKISPTTTTTPSTSTGGG), 966 to 985 (QQLQPQQKQQSPPLISSPPL), 1174 to 1219 (KNNQ…NNNS), 1326 to 1345 (ERKLNNKTSPTTPSSSGVST), 1907 to 1926 (ENINNNNNNNLTTSTTTTTT), 2024 to 2047 (DDYNDDNYNSNGNNNNNNSNNQLP), 2209 to 2290 (IKPA…NKNL), 2330 to 2353 (FNPKFSSSSSSSQQQQQQPLSPLL), 2509 to 2541 (KQLNNQLQQQSNNNNNNNNNNNNTNSNNSNLLG), 3209 to 3228 (GITNDPNNPNNPNNNPNNND), and 3310 to 3342 (INQQPNQQSSSPQSTNTTTTTTTNTTTTNNTTQ). 2 stretches are compositionally biased toward low complexity: residues 251-260 (QQQQQQQQQG) and 452-477 (LQQQQQQQQQNLNKISPTTTTTPSTS). Low complexity predominate over residues 1175–1190 (NNQNNNQNNNQNNNQN). A compositionally biased stretch (polar residues) spans 1191–1200 (INESSPTVFI). Pro residues predominate over residues 1202–1211 (SPPPPPPPPL). The segment covering 1333 to 1345 (TSPTTPSSSGVST) has biased composition (low complexity). 3 stretches are compositionally biased toward low complexity: residues 2029-2044 (DNYNSNGNNNNNNSNN), 2217-2289 (NNNN…NNKN), and 2335-2353 (SSSSSSSQQQQQQPLSPLL). Composition is skewed to low complexity over residues 3212–3228 (NDPNNPNNPNNNPNNND) and 3311–3342 (NQQPNQQSSSPQSTNTTTTTTTNTTTTNNTTQ).

This sequence belongs to the VPS13 family.

The protein localises to the membrane. In terms of biological role, mediates the transfer of lipids between membranes at organelle contact sites. The sequence is that of Intermembrane lipid transfer protein tipC (tipC) from Dictyostelium discoideum (Social amoeba).